The chain runs to 395 residues: Acid ceramidase (395 aa).

An N-terminal signal peptide occupies residues 1-21; that stretch reads MLGRSRLTFVLLSVTVTCSVA. A disulfide bridge links C31 with C340. The Nucleophile role is filled by C143. N-linked (GlcNAc...) asparagine glycosylation is found at N173, N259, N342, and N348. Cysteines 388 and 392 form a disulfide.

This sequence belongs to the acid ceramidase family. In terms of assembly, heterodimer; disulfide-linked. The heterodimer is composed of the disulfide-linked alpha and beta chains produced by autocatalytic cleavage of the precursor. Post-translationally, N-glycosylated. Proteolytically cleaved into two chains alpha and beta that remain associated via a disulfide bond. Cleavage gives rise to a conformation change that activates the enzyme. The same catalytic Cys residue mediates the autoproteolytic cleavage and subsequent hydrolysis of lipid substrates. The beta chain may undergo an additional C-terminal processing.

It is found in the lysosome. The protein localises to the secreted. It carries out the reaction an N-acylsphing-4-enine + H2O = sphing-4-enine + a fatty acid. The enzyme catalyses N-dodecanoylsphing-4-enine + H2O = dodecanoate + sphing-4-enine. It catalyses the reaction N-tetradecanoylsphing-4-enine + H2O = tetradecanoate + sphing-4-enine. The catalysed reaction is N-hexadecanoylsphing-4-enine + H2O = sphing-4-enine + hexadecanoate. It carries out the reaction N-octadecanoylsphing-4-enine + H2O = sphing-4-enine + octadecanoate. The enzyme catalyses N-dodecanoyl-(4R)-hydroxysphinganine + H2O = (4R)-hydroxysphinganine + dodecanoate. It catalyses the reaction N-(dodecanoyl)-sphinganine + H2O = dodecanoate + sphinganine. The catalysed reaction is N-(acetyl)-sphing-4-enine + H2O = sphing-4-enine + acetate. It carries out the reaction N-(hexanoyl)sphing-4-enine + H2O = hexanoate + sphing-4-enine. The enzyme catalyses N-octanoylsphing-4-enine + H2O = octanoate + sphing-4-enine. It catalyses the reaction N-(9Z-octadecenoyl)-sphing-4-enine + H2O = sphing-4-enine + (9Z)-octadecenoate. The catalysed reaction is N-dodecanoylethanolamine + H2O = dodecanoate + ethanolamine. The protein operates within lipid metabolism; sphingolipid metabolism. Lysosomal ceramidase that hydrolyzes sphingolipid ceramides into sphingosine and free fatty acids at acidic pH. Ceramides, sphingosine, and its phosphorylated form sphingosine-1-phosphate are bioactive lipids that mediate cellular signaling pathways regulating several biological processes including cell proliferation, apoptosis and differentiation. Has a higher catalytic efficiency towards C12-ceramides versus other ceramides. Also catalyzes the reverse reaction allowing the synthesis of ceramides from fatty acids and sphingosine. For the reverse synthetic reaction, the natural sphingosine D-erythro isomer is more efficiently utilized as a substrate compared to D-erythro-dihydrosphingosine and D-erythro-phytosphingosine, while the fatty acids with chain lengths of 12 or 14 carbons are the most efficiently used. Also has an N-acylethanolamine hydrolase activity. By regulating the levels of ceramides, sphingosine and sphingosine-1-phosphate in the epidermis, mediates the calcium-induced differentiation of epidermal keratinocytes. Also indirectly regulates tumor necrosis factor/TNF-induced apoptosis. By regulating the intracellular balance between ceramides and sphingosine, in adrenocortical cells, probably also acts as a regulator of steroidogenesis. In Balaenoptera acutorostrata scammoni (North Pacific minke whale), this protein is Acid ceramidase.